Here is a 412-residue protein sequence, read N- to C-terminus: MSDEFIDINNYIAIVYTYKTVGISKLYEHYVKDQELLLLKGLIKGEISVLQTCNRAETYLYTYNKEEFKDFLQKLDEIHGKQISKDAMILKGEDAVKHLFEVASGLDSLAIGEYEILRQLKESIEKSKKLGLSSEKLEFLFKNAIKVGRKIRQQTEISKGKTGIYALAVEYAKHVSNNNIGNVKIAIVGAGEIGNKLALMLKNEGAQNVTIFNRTYEKALEVANKYGFKAEPLDFYKINNYDIVFVAIYYDKKINLPNPKLVIDLSVPQIVLGNNVITLENLRSISDKIMETKILSLQKAEELIHIEIENFKNEIIKYNQNRLISKFMKRIEDIREAEINRAYAEILKHANDKEEIKNIIDKMTNSMLKKIFSPLFETVRKNEDMANYINNIFEILSNGNISNSKTEEAKEK.

Substrate is bound by residues T52–R55, S108, E113–E115, and Q119. The active-site Nucleophile is the C53. G189–G194 lines the NADP(+) pocket.

It belongs to the glutamyl-tRNA reductase family. Homodimer.

It catalyses the reaction (S)-4-amino-5-oxopentanoate + tRNA(Glu) + NADP(+) = L-glutamyl-tRNA(Glu) + NADPH + H(+). The protein operates within porphyrin-containing compound metabolism; protoporphyrin-IX biosynthesis; 5-aminolevulinate from L-glutamyl-tRNA(Glu): step 1/2. Its function is as follows. Catalyzes the NADPH-dependent reduction of glutamyl-tRNA(Glu) to glutamate 1-semialdehyde (GSA). This chain is Glutamyl-tRNA reductase, found in Sulfurisphaera tokodaii (strain DSM 16993 / JCM 10545 / NBRC 100140 / 7) (Sulfolobus tokodaii).